We begin with the raw amino-acid sequence, 129 residues long: Small ribosomal subunit protein uS11 (129 aa).

The protein belongs to the universal ribosomal protein uS11 family. Part of the 30S ribosomal subunit. Interacts with proteins S7 and S18. Binds to IF-3.

Functionally, located on the platform of the 30S subunit, it bridges several disparate RNA helices of the 16S rRNA. Forms part of the Shine-Dalgarno cleft in the 70S ribosome. The sequence is that of Small ribosomal subunit protein uS11 from Cereibacter sphaeroides (strain ATCC 17029 / ATH 2.4.9) (Rhodobacter sphaeroides).